We begin with the raw amino-acid sequence, 269 residues long: Phosphatidylglycerol--prolipoprotein diacylglyceryl transferase (269 aa).

3 helical membrane passes run 21-41, 54-74, and 88-108; these read WYGIIIASAVILAVYLSVLEG, LLLYSLPVAIICARIYYVVFE, and IWDGGIAIYGALIGAVIVILI. Arg136 provides a ligand contact to a 1,2-diacyl-sn-glycero-3-phospho-(1'-sn-glycerol). 2 helical membrane passes run 206–226 and 236–256; these read GEVVLSYIIWYSFGRFFIEGM and LRVSQWLSLILFISAIAAIFY.

This sequence belongs to the Lgt family.

Its subcellular location is the cell membrane. It catalyses the reaction L-cysteinyl-[prolipoprotein] + a 1,2-diacyl-sn-glycero-3-phospho-(1'-sn-glycerol) = an S-1,2-diacyl-sn-glyceryl-L-cysteinyl-[prolipoprotein] + sn-glycerol 1-phosphate + H(+). Its pathway is protein modification; lipoprotein biosynthesis (diacylglyceryl transfer). Functionally, catalyzes the transfer of the diacylglyceryl group from phosphatidylglycerol to the sulfhydryl group of the N-terminal cysteine of a prolipoprotein, the first step in the formation of mature lipoproteins. The sequence is that of Phosphatidylglycerol--prolipoprotein diacylglyceryl transferase from Ligilactobacillus salivarius (strain UCC118) (Lactobacillus salivarius).